The sequence spans 200 residues: Imidazoleglycerol-phosphate dehydratase (200 aa).

Residues E13, 39–47 (HMLTLLTFH), 68–72 (HHLIE), R94, and R116 contribute to the substrate site. Residues H39, H68, H69, and E72 each coordinate Mn(2+). Positions 141, 165, 166, and 169 each coordinate Mn(2+). Residues 165-173 (HHIIEGMFK) and 195-197 (SSK) contribute to the substrate site.

The protein belongs to the imidazoleglycerol-phosphate dehydratase family. It depends on Mn(2+) as a cofactor.

The protein localises to the cytoplasm. The catalysed reaction is D-erythro-1-(imidazol-4-yl)glycerol 3-phosphate = 3-(imidazol-4-yl)-2-oxopropyl phosphate + H2O. It participates in amino-acid biosynthesis; L-histidine biosynthesis; L-histidine from 5-phospho-alpha-D-ribose 1-diphosphate: step 6/9. In Lactococcus lactis subsp. lactis (strain IL1403) (Streptococcus lactis), this protein is Imidazoleglycerol-phosphate dehydratase (hisB).